A 61-amino-acid chain; its full sequence is Large ribosomal subunit protein uL30 (61 aa).

This sequence belongs to the universal ribosomal protein uL30 family. As to quaternary structure, part of the 50S ribosomal subunit.

In Petrotoga mobilis (strain DSM 10674 / SJ95), this protein is Large ribosomal subunit protein uL30.